The following is a 64-amino-acid chain: Neuropeptide-like 4 (64 aa).

The signal sequence occupies residues 1–18; it reads MFKLLVVVFAALFAAALA. 2 propeptides span residues 19–40 and 63–64; these read VPAP…EPAP and YG.

It is found in the secreted. The chain is Neuropeptide-like 4 (Nplp4) from Drosophila melanogaster (Fruit fly).